The primary structure comprises 278 residues: NH(3)-dependent NAD(+) synthetase (278 aa).

43–50 serves as a coordination point for ATP; that stretch reads GISGGVDS. Residue D49 coordinates Mg(2+). R146 contacts deamido-NAD(+). T166 contacts ATP. Residue E171 coordinates Mg(2+). Deamido-NAD(+)-binding residues include K179 and D186. Residues K195 and T217 each contribute to the ATP site. 266–267 is a binding site for deamido-NAD(+); the sequence is HK.

It belongs to the NAD synthetase family. As to quaternary structure, homodimer.

It carries out the reaction deamido-NAD(+) + NH4(+) + ATP = AMP + diphosphate + NAD(+) + H(+). It participates in cofactor biosynthesis; NAD(+) biosynthesis; NAD(+) from deamido-NAD(+) (ammonia route): step 1/1. Functionally, catalyzes the ATP-dependent amidation of deamido-NAD to form NAD. Uses ammonia as a nitrogen source. This is NH(3)-dependent NAD(+) synthetase from Pseudoalteromonas translucida (strain TAC 125).